A 781-amino-acid chain; its full sequence is Serine/threonine-protein kinase PLK4 (781 aa).

The Protein kinase domain maps to 14-268 (YEVQHLLGKG…LEQVLRHPFM (255 aa)). ATP-binding positions include 20 to 28 (LGKGGFACV) and lysine 43. The active-site Proton acceptor is the aspartate 139. In terms of domain architecture, Cryptic POLO box 1 (CPB1) spans 397-514 (TEHISVPPLN…ARFVGLVKSK (118 aa)). The interval 463-486 (QPDPGRGLPIQEQTSETHSSGTDN) is disordered. Positions 473–486 (QEQTSETHSSGTDN) are enriched in polar residues. The 104-residue stretch at 515–618 (TPKVTYFSAL…GRRPVVEVLP (104 aa)) folds into the Cryptic POLO box 2 (CPB2) domain. The POLO box domain occupies 672-751 (PIKRLNVPGV…LPQVQMKLRC (80 aa)).

The protein belongs to the protein kinase superfamily. Ser/Thr protein kinase family. CDC5/Polo subfamily. As to quaternary structure, homodimer. In terms of processing, ubiquitinated by the SCF(Slimb) ubiquitin ligase complex; leading to its degradation by the proteasome during interphase and regulating centriole number and ensuring the block to centriole reduplication.

It is found in the cytoplasm. It localises to the cytoskeleton. The protein resides in the microtubule organizing center. Its subcellular location is the centrosome. The protein localises to the centriole. It carries out the reaction L-seryl-[protein] + ATP = O-phospho-L-seryl-[protein] + ADP + H(+). The enzyme catalyses L-threonyl-[protein] + ATP = O-phospho-L-threonyl-[protein] + ADP + H(+). In terms of biological role, serine/threonine-protein kinase that plays a central role in centriole duplication. Able to trigger procentriole formation on the surface of the mother centriole cylinder, using mother centriole as a platform, leading to the recruitment of centriole biogenesis proteins such as sas-6. When overexpressed, it is able to induce centrosome amplification through the simultaneous generation of multiple procentrioles adjoining each parental centriole during S phase. Centrosome amplification following overexpression can initiate tumorigenesis, highlighting the importance of centrosome regulation in cancers. The polypeptide is Serine/threonine-protein kinase PLK4 (SAK) (Drosophila virilis (Fruit fly)).